The chain runs to 76 residues: Conotoxin TxMEKL-011 (76 aa).

Residues 1–19 (MEKLTILLLVAAVLMSTQA) form the signal peptide. The propeptide occupies 20–45 (LVERAGENRSKENIKFLLKRKRAADR). 3 cysteine pairs are disulfide-bonded: Cys51-Cys65, Cys58-Cys69, and Cys64-Cys73.

This sequence belongs to the conotoxin O2 superfamily. Expressed by the venom duct.

It is found in the secreted. This Conus textile (Cloth-of-gold cone) protein is Conotoxin TxMEKL-011.